Here is a 229-residue protein sequence, read N- to C-terminus: Large ribosomal subunit protein uL1 (229 aa).

The protein belongs to the universal ribosomal protein uL1 family. Part of the 50S ribosomal subunit.

In terms of biological role, binds directly to 23S rRNA. The L1 stalk is quite mobile in the ribosome, and is involved in E site tRNA release. Functionally, protein L1 is also a translational repressor protein, it controls the translation of the L11 operon by binding to its mRNA. This is Large ribosomal subunit protein uL1 from Streptococcus pneumoniae (strain JJA).